The primary structure comprises 32 residues: Dermatoxin-J3 (32 aa).

Gln-32 is modified (glutamine amide).

As to expression, expressed by the skin glands.

It is found in the secreted. In terms of biological role, antimicrobial peptide. This chain is Dermatoxin-J3, found in Phasmahyla jandaia (Jandaia leaf frog).